Here is a 203-residue protein sequence, read N- to C-terminus: Imidazole glycerol phosphate synthase subunit HisH 1 (203 aa).

One can recognise a Glutamine amidotransferase type-1 domain in the interval Met1–Ile203. Cys82 acts as the Nucleophile in catalysis. Catalysis depends on residues His184 and Glu186.

As to quaternary structure, heterodimer of HisH and HisF.

It is found in the cytoplasm. The catalysed reaction is 5-[(5-phospho-1-deoxy-D-ribulos-1-ylimino)methylamino]-1-(5-phospho-beta-D-ribosyl)imidazole-4-carboxamide + L-glutamine = D-erythro-1-(imidazol-4-yl)glycerol 3-phosphate + 5-amino-1-(5-phospho-beta-D-ribosyl)imidazole-4-carboxamide + L-glutamate + H(+). It catalyses the reaction L-glutamine + H2O = L-glutamate + NH4(+). It functions in the pathway amino-acid biosynthesis; L-histidine biosynthesis; L-histidine from 5-phospho-alpha-D-ribose 1-diphosphate: step 5/9. Its function is as follows. IGPS catalyzes the conversion of PRFAR and glutamine to IGP, AICAR and glutamate. The HisH subunit provides the glutamine amidotransferase activity that produces the ammonia necessary to HisF for the synthesis of IGP and AICAR. This Methanococcus maripaludis (strain DSM 14266 / JCM 13030 / NBRC 101832 / S2 / LL) protein is Imidazole glycerol phosphate synthase subunit HisH 1 (hisH1).